We begin with the raw amino-acid sequence, 171 residues long: 2-C-methyl-D-erythritol 2,4-cyclodiphosphate synthase (171 aa).

A divalent metal cation-binding residues include D8 and H10. Residues 8–10 and 34–35 contribute to the 4-CDP-2-C-methyl-D-erythritol 2-phosphate site; these read DVH and HS. H42 contacts a divalent metal cation. 4-CDP-2-C-methyl-D-erythritol 2-phosphate-binding positions include 56 to 58, 61 to 65, 132 to 135, F139, and R142; these read DIG, FPDTD, and TTTE.

This sequence belongs to the IspF family. In terms of assembly, homotrimer. A divalent metal cation serves as cofactor.

The catalysed reaction is 4-CDP-2-C-methyl-D-erythritol 2-phosphate = 2-C-methyl-D-erythritol 2,4-cyclic diphosphate + CMP. Its pathway is isoprenoid biosynthesis; isopentenyl diphosphate biosynthesis via DXP pathway; isopentenyl diphosphate from 1-deoxy-D-xylulose 5-phosphate: step 4/6. Involved in the biosynthesis of isopentenyl diphosphate (IPP) and dimethylallyl diphosphate (DMAPP), two major building blocks of isoprenoid compounds. Catalyzes the conversion of 4-diphosphocytidyl-2-C-methyl-D-erythritol 2-phosphate (CDP-ME2P) to 2-C-methyl-D-erythritol 2,4-cyclodiphosphate (ME-CPP) with a corresponding release of cytidine 5-monophosphate (CMP). This Geotalea daltonii (strain DSM 22248 / JCM 15807 / FRC-32) (Geobacter daltonii) protein is 2-C-methyl-D-erythritol 2,4-cyclodiphosphate synthase.